The following is a 305-amino-acid chain: tRNA pseudouridine synthase B (305 aa).

Aspartate 41 functions as the Nucleophile in the catalytic mechanism.

It belongs to the pseudouridine synthase TruB family. Type 1 subfamily.

It carries out the reaction uridine(55) in tRNA = pseudouridine(55) in tRNA. Its function is as follows. Responsible for synthesis of pseudouridine from uracil-55 in the psi GC loop of transfer RNAs. In Prochlorococcus marinus subsp. pastoris (strain CCMP1986 / NIES-2087 / MED4), this protein is tRNA pseudouridine synthase B.